A 393-amino-acid polypeptide reads, in one-letter code: DNA polymerase processivity factor (393 aa).

Disordered regions lie at residues 25-50, 311-339, and 355-393; these read EMER…REPP, ESRF…ALAS, and KNGT…RCVV. The segment covering 31-41 has biased composition (basic residues); it reads RDHHRDHRDHR. Residues 311-333 are compositionally biased toward basic and acidic residues; it reads ESRFERMGKQDDGKGDRSHKNDD.

Belongs to the herpesviridae polymerase accessory protein family.

Functionally, accessory subunit of the DNA polymerase that acts to increase the processivity of polymerization. This is DNA polymerase processivity factor (U27) from Human herpesvirus 6A (strain Uganda-1102) (HHV-6 variant A).